The sequence spans 86 residues: Large ribosomal subunit protein bL27 (86 aa).

The segment covering 1-10 (MAQKKGGGST) has biased composition (gly residues). Residues 1 to 20 (MAQKKGGGSTRNGRDSESKR) form a disordered region.

Belongs to the bacterial ribosomal protein bL27 family.

This chain is Large ribosomal subunit protein bL27, found in Bordetella avium (strain 197N).